The primary structure comprises 125 residues: Temptin (125 aa).

Positions Met-1–Ala-22 are cleaved as a signal peptide. 2 disulfide bridges follow: Cys-40–Cys-125 and Cys-79–Cys-99. The interval Leu-78 to Cys-125 is disordered. The segment covering Gln-103 to Leu-113 has biased composition (polar residues).

As to quaternary structure, binds to attractin and enticin. Produced by the albumen gland of the egg cordons.

The protein localises to the secreted. A component of the complex of water-borne protein pheromones that stimulates attraction and mating behavior. Modulates pheromone signaling by direct binding to attractin. This Aplysia californica (California sea hare) protein is Temptin.